The following is a 233-amino-acid chain: Large ribosomal subunit protein uL1 (233 aa).

Belongs to the universal ribosomal protein uL1 family. Part of the 50S ribosomal subunit.

Its function is as follows. Binds directly to 23S rRNA. The L1 stalk is quite mobile in the ribosome, and is involved in E site tRNA release. Protein L1 is also a translational repressor protein, it controls the translation of the L11 operon by binding to its mRNA. The chain is Large ribosomal subunit protein uL1 from Trichlorobacter lovleyi (strain ATCC BAA-1151 / DSM 17278 / SZ) (Geobacter lovleyi).